The primary structure comprises 157 residues: 3-dehydroquinate dehydratase (157 aa).

Y22 serves as the catalytic Proton acceptor. Residues N73, H79, and D86 each coordinate substrate. H99 (proton donor) is an active-site residue. Residues 100 to 101 (LS) and R110 contribute to the substrate site.

It belongs to the type-II 3-dehydroquinase family. As to quaternary structure, homododecamer.

It catalyses the reaction 3-dehydroquinate = 3-dehydroshikimate + H2O. The protein operates within metabolic intermediate biosynthesis; chorismate biosynthesis; chorismate from D-erythrose 4-phosphate and phosphoenolpyruvate: step 3/7. In terms of biological role, catalyzes a trans-dehydration via an enolate intermediate. This is 3-dehydroquinate dehydratase from Roseiflexus castenholzii (strain DSM 13941 / HLO8).